We begin with the raw amino-acid sequence, 689 residues long: Elongation factor G (689 aa).

The tr-type G domain maps to 8–282 (KKTRNIGIMA…AVIDYLPSPV (275 aa)). GTP-binding positions include 17 to 24 (AHIDAGKT), 81 to 85 (DTPGH), and 135 to 138 (NKMD).

The protein belongs to the TRAFAC class translation factor GTPase superfamily. Classic translation factor GTPase family. EF-G/EF-2 subfamily.

Its subcellular location is the cytoplasm. In terms of biological role, catalyzes the GTP-dependent ribosomal translocation step during translation elongation. During this step, the ribosome changes from the pre-translocational (PRE) to the post-translocational (POST) state as the newly formed A-site-bound peptidyl-tRNA and P-site-bound deacylated tRNA move to the P and E sites, respectively. Catalyzes the coordinated movement of the two tRNA molecules, the mRNA and conformational changes in the ribosome. The protein is Elongation factor G of Halothermothrix orenii (strain H 168 / OCM 544 / DSM 9562).